Consider the following 466-residue polypeptide: Argininosuccinate lyase (466 aa).

Belongs to the lyase 1 family. Argininosuccinate lyase subfamily.

The protein resides in the cytoplasm. The enzyme catalyses 2-(N(omega)-L-arginino)succinate = fumarate + L-arginine. The protein operates within amino-acid biosynthesis; L-arginine biosynthesis; L-arginine from L-ornithine and carbamoyl phosphate: step 3/3. The chain is Argininosuccinate lyase from Syntrophobacter fumaroxidans (strain DSM 10017 / MPOB).